Reading from the N-terminus, the 97-residue chain is Large ribosomal subunit protein bL27 (97 aa).

The disordered stretch occupies residues 1 to 21 (MAHKKGVGSSRNGRDSNPKYR).

It belongs to the bacterial ribosomal protein bL27 family.

This chain is Large ribosomal subunit protein bL27, found in Gemmatimonas aurantiaca (strain DSM 14586 / JCM 11422 / NBRC 100505 / T-27).